The sequence spans 268 residues: Interleukin-1 beta (268 aa).

Residues Met-1–Asp-116 constitute a propeptide that is removed on maturation.

It belongs to the IL-1 family. Monomer. In its precursor form, weakly interacts with full-length MEFV; the mature cytokine does not interact at all. Interacts with integrins ITGAV:ITGBV and ITGA5:ITGB1; integrin-binding is required for IL1B signaling. Interacts with cargo receptor TMED10; the interaction is direct and is required for the secretion of IL1B mature form. Interacts with HSP90AB1; the interaction facilitates cargo translocation into the ERGIC. Interacts with HSP90B1; the interaction facilitates cargo translocation into the ERGIC.

It localises to the cytoplasm. The protein resides in the cytosol. It is found in the secreted. Its subcellular location is the lysosome. The protein localises to the extracellular exosome. In terms of biological role, potent pro-inflammatory cytokine. Initially discovered as the major endogenous pyrogen, induces prostaglandin synthesis, neutrophil influx and activation, T-cell activation and cytokine production, B-cell activation and antibody production, and fibroblast proliferation and collagen production. Promotes Th17 differentiation of T-cells. Synergizes with IL12/interleukin-12 to induce IFNG synthesis from T-helper 1 (Th1) cells. Plays a role in angiogenesis by inducing VEGF production synergistically with TNF and IL6. Involved in transduction of inflammation downstream of pyroptosis: its mature form is specifically released in the extracellular milieu by passing through the gasdermin-D (GSDMD) pore. The protein is Interleukin-1 beta of Rattus norvegicus (Rat).